A 315-amino-acid polypeptide reads, in one-letter code: Protoheme IX farnesyltransferase (315 aa).

9 consecutive transmembrane segments (helical) span residues 32–52 (VMSL…GHMN), 53–73 (PVLA…SGAL), 93–113 (IPAG…LSAF), 120–140 (LMVN…YAVI), 153–173 (IVIG…AATG), 180–200 (LVLF…LSLF), 226–246 (ALFY…MGFA), 249–269 (FYGV…WRLW), and 295–315 (IFAV…FGVF).

This sequence belongs to the UbiA prenyltransferase family. Protoheme IX farnesyltransferase subfamily.

The protein localises to the cell inner membrane. It carries out the reaction heme b + (2E,6E)-farnesyl diphosphate + H2O = Fe(II)-heme o + diphosphate. Its pathway is porphyrin-containing compound metabolism; heme O biosynthesis; heme O from protoheme: step 1/1. Functionally, converts heme B (protoheme IX) to heme O by substitution of the vinyl group on carbon 2 of heme B porphyrin ring with a hydroxyethyl farnesyl side group. The chain is Protoheme IX farnesyltransferase from Brucella suis (strain ATCC 23445 / NCTC 10510).